We begin with the raw amino-acid sequence, 212 residues long: Proteasome subunit beta type-2 (212 aa).

This sequence belongs to the peptidase T1B family. In terms of assembly, the 26S proteasome consists of a 20S proteasome core and two 19S regulatory subunits. The 20S proteasome core is composed of 28 subunits that are arranged in four stacked rings, resulting in a barrel-shaped structure. The two end rings are each formed by seven alpha subunits, and the two central rings are each formed by seven beta subunits. The catalytic chamber with the active sites is on the inside of the barrel.

Its subcellular location is the cytoplasm. It localises to the nucleus. Its function is as follows. Non-catalytic component of the proteasome, a multicatalytic proteinase complex which is characterized by its ability to cleave peptides with Arg, Phe, Tyr, Leu, and Glu adjacent to the leaving group at neutral or slightly basic pH. The proteasome has an ATP-dependent proteolytic activity. The chain is Proteasome subunit beta type-2 (PBD1) from Oryza sativa subsp. japonica (Rice).